We begin with the raw amino-acid sequence, 578 residues long: Proline--tRNA ligase (578 aa).

It belongs to the class-II aminoacyl-tRNA synthetase family. ProS type 1 subfamily. As to quaternary structure, homodimer.

The protein localises to the cytoplasm. It catalyses the reaction tRNA(Pro) + L-proline + ATP = L-prolyl-tRNA(Pro) + AMP + diphosphate. Functionally, catalyzes the attachment of proline to tRNA(Pro) in a two-step reaction: proline is first activated by ATP to form Pro-AMP and then transferred to the acceptor end of tRNA(Pro). As ProRS can inadvertently accommodate and process non-cognate amino acids such as alanine and cysteine, to avoid such errors it has two additional distinct editing activities against alanine. One activity is designated as 'pretransfer' editing and involves the tRNA(Pro)-independent hydrolysis of activated Ala-AMP. The other activity is designated 'posttransfer' editing and involves deacylation of mischarged Ala-tRNA(Pro). The misacylated Cys-tRNA(Pro) is not edited by ProRS. This Syntrophus aciditrophicus (strain SB) protein is Proline--tRNA ligase.